We begin with the raw amino-acid sequence, 276 residues long: Anamorsin homolog (276 aa).

Positions 1 to 152 are N-terminal SAM-like domain; that stretch reads MEPYVVDNLN…TRGSSIKLPW (152 aa). The tract at residues 152–189 is linker; the sequence is WAHSDIEAAWENVDNETSYDVDKNLINTNSLLQKSDYV. [2Fe-2S] cluster-binding residues include Cys195, Cys211, Cys214, and Cys216. A fe-S binding site A region spans residues 195–216; the sequence is CGQEFAKNSIGKRKRACKNCTC. [4Fe-4S] cluster is bound by residues Cys237, Cys240, Cys248, and Cys251. 2 short sequence motifs (cx2C motif) span residues 237-240 and 248-251; these read CGNC and CSTC. The tract at residues 237 to 251 is fe-S binding site B; it reads CGNCYLGDAFRCSTC.

It belongs to the anamorsin family. In terms of assembly, monomer. It depends on [2Fe-2S] cluster as a cofactor. [4Fe-4S] cluster serves as cofactor.

It is found in the cytoplasm. Its subcellular location is the mitochondrion intermembrane space. In terms of biological role, component of the cytosolic iron-sulfur (Fe-S) protein assembly (CIA) machinery. Required for the maturation of extramitochondrial Fe-S proteins. Part of an electron transfer chain functioning in an early step of cytosolic Fe-S biogenesis, facilitating the de novo assembly of a [4Fe-4S] cluster on the cytosolic Fe-S scaffold complex. Electrons are transferred from NADPH via a FAD- and FMN-containing diflavin oxidoreductase. Together with the diflavin oxidoreductase, also required for the assembly of the diferric tyrosyl radical cofactor of ribonucleotide reductase (RNR), probably by providing electrons for reduction during radical cofactor maturation in the catalytic small subunit. The chain is Anamorsin homolog from Schistosoma japonicum (Blood fluke).